The following is a 209-amino-acid chain: Egg case collagen (209 aa).

The interval 1–129 (VYMSGXGKPP…YKGNHGFYLV (129 aa)) is nonhelical region. Residues 130-209 (LPAGYPGTPG…DPGLPGEYGV (80 aa)) form a triple-helical region region. The disordered stretch occupies residues 138-209 (PGTPGPRGGP…DPGLPGEYGV (72 aa)). Gly residues predominate over residues 142–162 (GPRGGPGDPGMPGEPGVGFPG).

In terms of biological role, major component of the egg case wall which is secreted by the oviduct. The egg case combines mechanical strength and toughness with high permeability to small molecules and ions. The chain is Egg case collagen from Scyliorhinus canicula (Small-spotted catshark).